Reading from the N-terminus, the 750-residue chain is Photosystem I P700 chlorophyll a apoprotein A1 (750 aa).

The next 8 helical transmembrane spans lie at 70-93 (VFSAHFGQLSIIFLWLSGMYFHGA), 156-179 (LYCTAIGALVFAALMLFAGWFHYH), 195-219 (LNHHLAGLLGLGSLSWAGHQVHVSL), 291-309 (IAHHHLAIAILFLLAGHMY), 346-369 (WHAQLSLNLAMLGSLTIVVAHHMY), 385-411 (LSLFTHHMWIGGFLIVGAAAHAAIFMV), 433-455 (AIISHLNWVCIFLGFHSFGLYIH), and 531-549 (FLVHHIHAFTIHVTVLILL). 2 residues coordinate [4Fe-4S] cluster: Cys-573 and Cys-582. The next 2 membrane-spanning stretches (helical) occupy residues 589-610 (HVFLGLFWMYNAISVVIFHFSW) and 664-686 (LSAYGLFFLGAHFVWAFSLMFLF). Position 675 (His-675) interacts with chlorophyll a'. The chlorophyll a site is built by Met-683 and Tyr-691. Trp-692 lines the phylloquinone pocket. The chain crosses the membrane as a helical span at residues 724–744 (AVGVTHYLLGGIATTWAFFLA).

It belongs to the PsaA/PsaB family. The PsaA/B heterodimer binds the P700 chlorophyll special pair and subsequent electron acceptors. PSI consists of a core antenna complex that captures photons, and an electron transfer chain that converts photonic excitation into a charge separation. The eukaryotic PSI reaction center is composed of at least 11 subunits. P700 is a chlorophyll a/chlorophyll a' dimer, A0 is one or more chlorophyll a, A1 is one or both phylloquinones and FX is a shared 4Fe-4S iron-sulfur center. is required as a cofactor.

Its subcellular location is the plastid. It is found in the chloroplast thylakoid membrane. It catalyses the reaction reduced [plastocyanin] + hnu + oxidized [2Fe-2S]-[ferredoxin] = oxidized [plastocyanin] + reduced [2Fe-2S]-[ferredoxin]. Its function is as follows. PsaA and PsaB bind P700, the primary electron donor of photosystem I (PSI), as well as the electron acceptors A0, A1 and FX. PSI is a plastocyanin-ferredoxin oxidoreductase, converting photonic excitation into a charge separation, which transfers an electron from the donor P700 chlorophyll pair to the spectroscopically characterized acceptors A0, A1, FX, FA and FB in turn. Oxidized P700 is reduced on the lumenal side of the thylakoid membrane by plastocyanin. In Arabis hirsuta (Hairy rock-cress), this protein is Photosystem I P700 chlorophyll a apoprotein A1.